The primary structure comprises 591 residues: Metastasis-associated protein MTA3 (591 aa).

Residues 1 to 147 (MAANMYRVGD…PSVKTLLADK (147 aa)) form the BAH domain. Positions 148-258 (GEIRVGPKYQ…SAISVLVPLG (111 aa)) constitute an ELM2 domain. Positions 265–317 (DEMEEWSASEACLFEEALEKYGKDFNDIRQDFLPWKSLTSIIEYYYMWKTTDR) constitute an SANT domain. The GATA-type; atypical zinc finger occupies 377–404 (CESCYATQSHQWYSWGPPNMQCRLCATC). Residues 417-456 (PTQSDEEKSPSPTAEDPRARSHMSRQALQGMPVRNTGSPK) form a disordered region. The segment covering 421–435 (DEEKSPSPTAEDPRA) has biased composition (basic and acidic residues). S425 and S427 each carry phosphoserine. Phosphothreonine is present on T452. The residue at position 516 (S516) is a Phosphoserine.

The protein belongs to the metastasis-associated protein family. Component of the nucleosome remodeling and deacetylase (NuRD) repressor complex, composed of core proteins MTA1, MTA2, MTA3, RBBP4, RBBP7, HDAC1, HDAC2, MBD2, MBD3, and peripherally associated proteins CDK2AP1, CDK2AP2, GATAD2A, GATAD2B, CHD3, CHD4 and CHD5. The exact stoichiometry of the NuRD complex is unknown, and some subunits such as MBD2 and MBD3, GATAD2A and GATAD2B, and CHD3, CHD4 and CHD5 define mutually exclusive NuRD complexes. Interacts with BCL6. Interacts with NACC2. Interacts with PWWP2B. As to expression, expressed in heart, brain, spleen, lung, liver and kidney.

The protein resides in the nucleus. The protein localises to the cytoplasm. Functionally, acts as a component of the histone deacetylase NuRD complex which participates in the remodeling of chromatin. Plays a role in maintenance of the normal epithelial architecture through the repression of SNAI1 transcription in a histone deacetylase-dependent manner, and thus the regulation of E-cadherin levels. Contributes to transcriptional repression by BCL6. This chain is Metastasis-associated protein MTA3 (Mta3), found in Mus musculus (Mouse).